The following is a 530-amino-acid chain: Autoinducer-2 kinase (530 aa).

Belongs to the FGGY kinase family.

It localises to the cytoplasm. It carries out the reaction (S)-4,5-dihydroxypentane-2,3-dione + ATP = (2S)-2-hydroxy-3,4-dioxopentyl phosphate + ADP + H(+). In terms of biological role, catalyzes the phosphorylation of autoinducer-2 (AI-2) to phospho-AI-2, which subsequently inactivates the transcriptional regulator LsrR and leads to the transcription of the lsr operon. Phosphorylates the ring-open form of (S)-4,5-dihydroxypentane-2,3-dione (DPD), which is the precursor to all AI-2 signaling molecules, at the C5 position. In Yersinia pestis bv. Antiqua (strain Antiqua), this protein is Autoinducer-2 kinase.